We begin with the raw amino-acid sequence, 308 residues long: Ornithine carbamoyltransferase (308 aa).

Carbamoyl phosphate-binding positions include 52–55, Q79, R103, and 130–133; these read STRT and HPLQ. L-ornithine contacts are provided by residues N162, D224, and 228–229; that span reads SM. Carbamoyl phosphate-binding positions include 264–265 and R292; that span reads CL.

Belongs to the aspartate/ornithine carbamoyltransferase superfamily. OTCase family.

The protein localises to the cytoplasm. It carries out the reaction carbamoyl phosphate + L-ornithine = L-citrulline + phosphate + H(+). Its pathway is amino-acid biosynthesis; L-arginine biosynthesis; L-arginine from L-ornithine and carbamoyl phosphate: step 1/3. Reversibly catalyzes the transfer of the carbamoyl group from carbamoyl phosphate (CP) to the N(epsilon) atom of ornithine (ORN) to produce L-citrulline. The protein is Ornithine carbamoyltransferase of Pyrobaculum calidifontis (strain DSM 21063 / JCM 11548 / VA1).